A 150-amino-acid chain; its full sequence is Ribonuclease H (150 aa).

Residues Asp-3–Asp-144 form the RNase H type-1 domain. Residues Asp-12, Glu-50, Asp-72, and Asp-136 each coordinate Mg(2+). A disordered region spans residues Asp-129–Lys-150.

The protein belongs to the RNase H family. Monomer. Mg(2+) serves as cofactor.

Its subcellular location is the cytoplasm. The catalysed reaction is Endonucleolytic cleavage to 5'-phosphomonoester.. Endonuclease that specifically degrades the RNA of RNA-DNA hybrids. The protein is Ribonuclease H of Hyphomonas neptunium (strain ATCC 15444).